The chain runs to 293 residues: uncharacterized protein (293 aa).

Residues 1–60 (MHITLRQLEVFAEVLKSGSTTQASVMLALSQSAVSAALTDLEGQLGVQLFDRVGKRLVVN) enclose the HTH lysR-type domain. A DNA-binding region (H-T-H motif) is located at residues 20–39 (TTQASVMLALSQSAVSAALT).

It belongs to the LysR transcriptional regulatory family.

This is an uncharacterized protein from Escherichia coli O157:H7.